The primary structure comprises 207 residues: uncharacterized protein (207 aa).

This sequence to M.leprae ML1660.

This is an uncharacterized protein from Mycobacterium tuberculosis (strain CDC 1551 / Oshkosh).